A 156-amino-acid polypeptide reads, in one-letter code: Putative thymidylate kinase (156 aa).

Residue 7–14 coordinates ATP; sequence GLDGTGKT.

The protein belongs to the thymidylate kinase family.

It catalyses the reaction dTMP + ATP = dTDP + ADP. The protein operates within pyrimidine metabolism; dTTP biosynthesis. Its function is as follows. Catalyzes the conversion of dTMP to dTDP. The sequence is that of Putative thymidylate kinase from Acidianus convivator (ABV).